Here is a 259-residue protein sequence, read N- to C-terminus: Cytosolic Fe-S cluster assembly factor Nubp2 homolog (259 aa).

14–21 (GKGGVGKS) provides a ligand contact to ATP. [4Fe-4S] cluster is bound by residues Cys-188 and Cys-191.

It belongs to the Mrp/NBP35 ATP-binding proteins family. NUBP2/CFD1 subfamily. As to quaternary structure, heterotetramer of 2 Nubp1 and 2 Nubp2 chains. Requires [4Fe-4S] cluster as cofactor.

It is found in the cytoplasm. In terms of biological role, component of the cytosolic iron-sulfur (Fe/S) protein assembly (CIA) machinery. Required for maturation of extramitochondrial Fe-S proteins. The Nubp1-Nubp2 heterotetramer forms a Fe-S scaffold complex, mediating the de novo assembly of an Fe-S cluster and its transfer to target apoproteins. This is Cytosolic Fe-S cluster assembly factor Nubp2 homolog from Aedes aegypti (Yellowfever mosquito).